A 721-amino-acid chain; its full sequence is 1,4-alpha-glucan branching enzyme GlgB (721 aa).

The Nucleophile role is filled by Asp400. Glu453 acts as the Proton donor in catalysis.

Belongs to the glycosyl hydrolase 13 family. GlgB subfamily. Monomer.

It catalyses the reaction Transfers a segment of a (1-&gt;4)-alpha-D-glucan chain to a primary hydroxy group in a similar glucan chain.. Its pathway is glycan biosynthesis; glycogen biosynthesis. Its function is as follows. Catalyzes the formation of the alpha-1,6-glucosidic linkages in glycogen by scission of a 1,4-alpha-linked oligosaccharide from growing alpha-1,4-glucan chains and the subsequent attachment of the oligosaccharide to the alpha-1,6 position. The polypeptide is 1,4-alpha-glucan branching enzyme GlgB (Chlamydia abortus (strain DSM 27085 / S26/3) (Chlamydophila abortus)).